A 112-amino-acid chain; its full sequence is Ribonuclease P protein component (112 aa).

It belongs to the RnpA family. In terms of assembly, consists of a catalytic RNA component (M1 or rnpB) and a protein subunit.

The enzyme catalyses Endonucleolytic cleavage of RNA, removing 5'-extranucleotides from tRNA precursor.. Its function is as follows. RNaseP catalyzes the removal of the 5'-leader sequence from pre-tRNA to produce the mature 5'-terminus. It can also cleave other RNA substrates such as 4.5S RNA. The protein component plays an auxiliary but essential role in vivo by binding to the 5'-leader sequence and broadening the substrate specificity of the ribozyme. This Mycoplasma mobile (strain ATCC 43663 / 163K / NCTC 11711) (Mesomycoplasma mobile) protein is Ribonuclease P protein component.